A 304-amino-acid polypeptide reads, in one-letter code: Protease HtpX homolog (304 aa).

The next 2 membrane-spanning stretches (helical) occupy residues 14-34 (VFII…IGII) and 39-59 (YLNG…IMVM). His144 is a Zn(2+) binding site. The active site involves Glu145. His148 provides a ligand contact to Zn(2+). 2 helical membrane-spanning segments follow: residues 159-179 (IAIA…RMIF) and 202-222 (AIIY…ATAI). Residue Glu231 participates in Zn(2+) binding.

It belongs to the peptidase M48B family. It depends on Zn(2+) as a cofactor.

The protein localises to the cell membrane. This is Protease HtpX homolog from Listeria monocytogenes serotype 4a (strain HCC23).